A 66-amino-acid polypeptide reads, in one-letter code: Large ribosomal subunit protein bL35 (66 aa).

This sequence belongs to the bacterial ribosomal protein bL35 family.

The chain is Large ribosomal subunit protein bL35 from Treponema pallidum (strain Nichols).